The primary structure comprises 581 residues: Putative phospholipase B-like 3 (581 aa).

An N-terminal signal peptide occupies residues 1 to 16; the sequence is MKLLFFLFGLIFAVEQ. N-linked (GlcNAc...) asparagine glycosylation is found at Asn-50, Asn-82, Asn-132, Asn-169, Asn-215, Asn-309, Asn-543, Asn-546, and Asn-560.

The protein belongs to the phospholipase B-like family.

Its subcellular location is the secreted. Its function is as follows. Putative phospholipase. The chain is Putative phospholipase B-like 3 from Caenorhabditis elegans.